The sequence spans 702 residues: Methionine--tRNA ligase (702 aa).

Positions 23–33 (PYANGPLHLGH) match the 'HIGH' region motif. Zn(2+) contacts are provided by Cys-154, Cys-157, Cys-167, and Cys-170. The 'KMSKS' region signature appears at 341-345 (KMSKS). Lys-344 contacts ATP. The disordered stretch occupies residues 562-593 (LAPPPASAKQQNASMSNTAPPPTAEKPETTAP). Over residues 569-578 (AKQQNASMSN) the composition is skewed to polar residues. The region spanning 599-702 (DFAKLDLRIG…SSAQPGMPVR (104 aa)) is the tRNA-binding domain.

This sequence belongs to the class-I aminoacyl-tRNA synthetase family. MetG type 1 subfamily. As to quaternary structure, homodimer. The cofactor is Zn(2+).

Its subcellular location is the cytoplasm. The catalysed reaction is tRNA(Met) + L-methionine + ATP = L-methionyl-tRNA(Met) + AMP + diphosphate. In terms of biological role, is required not only for elongation of protein synthesis but also for the initiation of all mRNA translation through initiator tRNA(fMet) aminoacylation. In Xylella fastidiosa (strain 9a5c), this protein is Methionine--tRNA ligase.